The following is a 188-amino-acid chain: ATP synthase subunit b (188 aa).

A helical membrane pass occupies residues 19 to 39 (VYVLGATIVSFLVLFLFITYF).

It belongs to the ATPase B chain family. In terms of assembly, F-type ATPases have 2 components, F(1) - the catalytic core - and F(0) - the membrane proton channel. F(1) has five subunits: alpha(3), beta(3), gamma(1), delta(1), epsilon(1). F(0) has three main subunits: a(1), b(2) and c(10-14). The alpha and beta chains form an alternating ring which encloses part of the gamma chain. F(1) is attached to F(0) by a central stalk formed by the gamma and epsilon chains, while a peripheral stalk is formed by the delta and b chains.

Its subcellular location is the cell membrane. In terms of biological role, f(1)F(0) ATP synthase produces ATP from ADP in the presence of a proton or sodium gradient. F-type ATPases consist of two structural domains, F(1) containing the extramembraneous catalytic core and F(0) containing the membrane proton channel, linked together by a central stalk and a peripheral stalk. During catalysis, ATP synthesis in the catalytic domain of F(1) is coupled via a rotary mechanism of the central stalk subunits to proton translocation. Functionally, component of the F(0) channel, it forms part of the peripheral stalk, linking F(1) to F(0). The polypeptide is ATP synthase subunit b (Mesomycoplasma hyopneumoniae (strain 7448) (Mycoplasma hyopneumoniae)).